The following is a 647-amino-acid chain: Probable potassium transport system protein Kup (647 aa).

13 helical membrane passes run 32–52, 74–94, 124–144, 166–186, 193–213, 230–250, 271–291, 300–320, 322–342, 361–381, 390–410, 418–438, and 443–463; these read IALM…SPLY, VISM…VLFV, LLII…AIIT, FVLP…KTGT, FGPI…HQVI, FLIE…LVLT, WFFI…AMFL, PFFL…ATAA, VIAS…AILL, IYMP…VLAF, AYGI…AIVM, TILV…FLTA, and IMEG…FLMT.

It belongs to the HAK/KUP transporter (TC 2.A.72) family.

The protein localises to the cell inner membrane. The catalysed reaction is K(+)(in) + H(+)(in) = K(+)(out) + H(+)(out). In terms of biological role, transport of potassium into the cell. Likely operates as a K(+):H(+) symporter. This chain is Probable potassium transport system protein Kup, found in Polynucleobacter asymbioticus (strain DSM 18221 / CIP 109841 / QLW-P1DMWA-1) (Polynucleobacter necessarius subsp. asymbioticus).